The sequence spans 130 residues: MTLLDPLANALSHITNSERVGKKEVYIKPASKLIGEVLRVMQENGYIGEFEFIDDGRAGIYRVQLIGKINKAGAIKPRFPVKAREYEAWEKRFLPAFEFGILIVSTSQGVMTHKEAIEKGIGGRLIAYVY.

It belongs to the universal ribosomal protein uS8 family. Part of the 30S ribosomal subunit.

One of the primary rRNA binding proteins, it binds directly to 16S rRNA central domain where it helps coordinate assembly of the platform of the 30S subunit. This Thermococcus onnurineus (strain NA1) protein is Small ribosomal subunit protein uS8.